The following is a 388-amino-acid chain: Dual-specificity RNA methyltransferase RlmN (388 aa).

The Proton acceptor role is filled by glutamate 109. The 240-residue stretch at 115–354 (EDDRATLCVS…TIVRKTRGDD (240 aa)) folds into the Radical SAM core domain. A disulfide bond links cysteine 122 and cysteine 359. Cysteine 129, cysteine 133, and cysteine 136 together coordinate [4Fe-4S] cluster. S-adenosyl-L-methionine-binding positions include 183–184 (GE), serine 215, 237–239 (SLH), and asparagine 316. Cysteine 359 (S-methylcysteine intermediate) is an active-site residue.

Belongs to the radical SAM superfamily. RlmN family. [4Fe-4S] cluster is required as a cofactor.

The protein localises to the cytoplasm. It carries out the reaction adenosine(2503) in 23S rRNA + 2 reduced [2Fe-2S]-[ferredoxin] + 2 S-adenosyl-L-methionine = 2-methyladenosine(2503) in 23S rRNA + 5'-deoxyadenosine + L-methionine + 2 oxidized [2Fe-2S]-[ferredoxin] + S-adenosyl-L-homocysteine. The catalysed reaction is adenosine(37) in tRNA + 2 reduced [2Fe-2S]-[ferredoxin] + 2 S-adenosyl-L-methionine = 2-methyladenosine(37) in tRNA + 5'-deoxyadenosine + L-methionine + 2 oxidized [2Fe-2S]-[ferredoxin] + S-adenosyl-L-homocysteine. Its function is as follows. Specifically methylates position 2 of adenine 2503 in 23S rRNA and position 2 of adenine 37 in tRNAs. m2A2503 modification seems to play a crucial role in the proofreading step occurring at the peptidyl transferase center and thus would serve to optimize ribosomal fidelity. The chain is Dual-specificity RNA methyltransferase RlmN from Salmonella typhimurium (strain LT2 / SGSC1412 / ATCC 700720).